Here is a 300-residue protein sequence, read N- to C-terminus: Ribonuclease HIII (300 aa).

The region spanning 86–300 is the RNase H type-2 domain; it reads RPRLGVDESG…FYEICDSTDI (215 aa). A divalent metal cation-binding residues include Asp-92, Glu-93, and Asp-196.

It belongs to the RNase HII family. RnhC subfamily. Mn(2+) serves as cofactor. Mg(2+) is required as a cofactor.

The protein resides in the cytoplasm. It catalyses the reaction Endonucleolytic cleavage to 5'-phosphomonoester.. Endonuclease that specifically degrades the RNA of RNA-DNA hybrids. This is Ribonuclease HIII from Chlamydia abortus (strain DSM 27085 / S26/3) (Chlamydophila abortus).